Here is a 445-residue protein sequence, read N- to C-terminus: UPF0210 protein SPH_0352 (445 aa).

The protein belongs to the UPF0210 family. As to quaternary structure, homodimer.

The polypeptide is UPF0210 protein SPH_0352 (Streptococcus pneumoniae (strain Hungary19A-6)).